A 102-amino-acid chain; its full sequence is PE family immunomodulator PE5 (102 aa).

In terms of domain architecture, PE spans 3–92; that stretch reads LRVVPEGLAA…GASYLAGDAA (90 aa).

It belongs to the mycobacterial PE family.

Its subcellular location is the secreted. The protein localises to the cell envelope. The protein resides in the cell surface. Important for the siderophore-mediated iron-acquisition function of ESX-3. May play a pivotal role in the evasion of host immune response by M.tuberculosis. Mediates production of IL-10 via activation of the p38 and ERK1/2 mitogen-activated protein kinase (MAPK) signaling pathways. The sequence is that of PE family immunomodulator PE5 from Mycobacterium tuberculosis (strain ATCC 25618 / H37Rv).